Here is a 395-residue protein sequence, read N- to C-terminus: uncharacterized protein (395 aa).

It belongs to the UDP-glycosyltransferase family.

This is an uncharacterized protein from Bacillus subtilis (strain 168).